Reading from the N-terminus, the 54-residue chain is Large ribosomal subunit protein eL37 (54 aa).

Zn(2+) is bound by residues Cys20, Cys23, Cys35, and Cys38. The segment at 20-38 (CRRCGHHTYNVRTKRCSHC) adopts a C4-type zinc-finger fold.

The protein belongs to the eukaryotic ribosomal protein eL37 family. Zn(2+) serves as cofactor.

Binds to the 23S rRNA. This Thermoplasma acidophilum (strain ATCC 25905 / DSM 1728 / JCM 9062 / NBRC 15155 / AMRC-C165) protein is Large ribosomal subunit protein eL37 (rpl37e).